Here is an 86-residue protein sequence, read N- to C-terminus: RNA-binding protein Hfq (86 aa).

Residues 12 to 73 enclose the Sm domain; sequence DIFLNQVRKE…ISTITPQKPV (62 aa).

This sequence belongs to the Hfq family. Homohexamer.

Functionally, RNA chaperone that binds small regulatory RNA (sRNAs) and mRNAs to facilitate mRNA translational regulation in response to envelope stress, environmental stress and changes in metabolite concentrations. Also binds with high specificity to tRNAs. This Thermoanaerobacter pseudethanolicus (strain ATCC 33223 / 39E) (Clostridium thermohydrosulfuricum) protein is RNA-binding protein Hfq.